A 291-amino-acid chain; its full sequence is Tyrosine-protein kinase PtkA (291 aa).

The tract at residues 1 to 79 (MSSPRERRPA…RRASSPGESP (79 aa)) is disordered. Residues 23-60 (HQTSRSSPDTTAPTGSGLSNRFVNDNGIVTDTTASGTN) are compositionally biased toward polar residues. Phosphotyrosine is present on Tyr-262.

Belongs to the HAD-like hydrolase superfamily. CbbY/CbbZ/Gph/YieH family. As to quaternary structure, interacts with PtpA. Post-translationally, autophosphorylated.

It catalyses the reaction L-tyrosyl-[protein] + ATP = O-phospho-L-tyrosyl-[protein] + ADP + H(+). Its function is as follows. Required for growth within macrophages. Catalyzes the phosphorylation of PtpA on the tyrosine residues at positions 128 and 129, thereby increasing PtpA phosphatase activity and promoting pathogenicity. The protein is Tyrosine-protein kinase PtkA of Mycobacterium bovis (strain ATCC BAA-935 / AF2122/97).